Reading from the N-terminus, the 225-residue chain is NAD(P)H-quinone oxidoreductase subunit K, chloroplastic (225 aa).

The [4Fe-4S] cluster site is built by cysteine 43, cysteine 44, cysteine 108, and cysteine 139.

This sequence belongs to the complex I 20 kDa subunit family. As to quaternary structure, NDH is composed of at least 16 different subunits, 5 of which are encoded in the nucleus. [4Fe-4S] cluster serves as cofactor.

The protein localises to the plastid. The protein resides in the chloroplast thylakoid membrane. The enzyme catalyses a plastoquinone + NADH + (n+1) H(+)(in) = a plastoquinol + NAD(+) + n H(+)(out). It carries out the reaction a plastoquinone + NADPH + (n+1) H(+)(in) = a plastoquinol + NADP(+) + n H(+)(out). Functionally, NDH shuttles electrons from NAD(P)H:plastoquinone, via FMN and iron-sulfur (Fe-S) centers, to quinones in the photosynthetic chain and possibly in a chloroplast respiratory chain. The immediate electron acceptor for the enzyme in this species is believed to be plastoquinone. Couples the redox reaction to proton translocation, and thus conserves the redox energy in a proton gradient. The chain is NAD(P)H-quinone oxidoreductase subunit K, chloroplastic from Crucihimalaya wallichii (Rock-cress).